The primary structure comprises 365 residues: tRNA/tmRNA (uracil-C(5))-methyltransferase (365 aa).

Residues Q189, Y217, N222, E238, and D298 each coordinate S-adenosyl-L-methionine. Residue C323 is the Nucleophile of the active site. E357 serves as the catalytic Proton acceptor.

Belongs to the class I-like SAM-binding methyltransferase superfamily. RNA M5U methyltransferase family. TrmA subfamily.

The enzyme catalyses uridine(54) in tRNA + S-adenosyl-L-methionine = 5-methyluridine(54) in tRNA + S-adenosyl-L-homocysteine + H(+). The catalysed reaction is uridine(341) in tmRNA + S-adenosyl-L-methionine = 5-methyluridine(341) in tmRNA + S-adenosyl-L-homocysteine + H(+). Functionally, dual-specificity methyltransferase that catalyzes the formation of 5-methyluridine at position 54 (m5U54) in all tRNAs, and that of position 341 (m5U341) in tmRNA (transfer-mRNA). This chain is tRNA/tmRNA (uracil-C(5))-methyltransferase, found in Shewanella baltica (strain OS155 / ATCC BAA-1091).